The chain runs to 267 residues: X-box-binding protein 1 (267 aa).

Over 1–180 (MVVVAAAPSA…VQAQLSPPQN (180 aa)) the chain is Cytoplasmic. The disordered stretch occupies residues 35–56 (VPGPRAAGSEASGTPQARKRQR). Ser-61 carries the phosphoserine modification. The bZIP domain maps to 63-126 (EEKALRRKLK…HGLVVENQEL (64 aa)). A basic motif region spans residues 65 to 87 (KALRRKLKNRVAAQTARDRKKAR). The segment at 69-85 (RKLKNRVAAQTARDRKK) is nuclear localization signal (NLS). The interval 91–126 (LEQQVVDLEEENHKLQLENQLLREKTHGLVVENQEL) is leucine-zipper. A helical; Signal-anchor for type II membrane protein transmembrane segment spans residues 181–198 (IFPWTLTLLPLQILSLIS). Residues 199 to 267 (FWAFWTSWTL…FVLTMYTPSL (69 aa)) are Lumenal-facing. Positions 230 to 256 (QKDLVPYQPPFLCQWGPHQPSWKPLMN) are necessary for the translational pausing of its own mRNA.

The protein belongs to the bZIP family. In terms of assembly, isoform 1 interacts with HM13. Isoform 1 interacts with RNF139; the interaction induces ubiquitination and degradation of isoform 1. Isoform 1 interacts (via luminal domain) with DERL1; the interaction obviates the need for ectodomain shedding prior HM13/SPP-mediated XBP1 isoform 1 cleavage. Isoform 1 interacts with isoform 2; the interaction sequesters isoform 2 from the nucleus and enhances isoform 2 degradation in the cytoplasm. Isoform 1 interacts with HDAC3 and AKT1; the interactions occur in endothelial cell (EC) under disturbed flow. Isoform 1 interacts with the oncoprotein FOS. Isoform 2 interacts with ATF6; the interaction occurs in a ER stress-dependent manner and is required for DNA binding to the unfolded protein response element (UPRE). Isoform 2 interacts with PIK3R1; the interaction is direct and induces translocation of XBP1 isoform 2 into the nucleus and the unfolded protein response (UPR) XBP1-dependent target genes activation in a ER stress- and/or insulin-dependent but PI3K-independent manner. Isoform 2 interacts with SIRT1. Isoform 2 interacts with PIK3R1 and PIK3R2; the interactions are direct and induce translocation of XBP1 isoform 2 into the nucleus and the unfolded protein response (UPR) XBP1-dependent target genes activation in a ER stress- and/or insulin-dependent but PI3K-independent manner. Isoform 2 interacts with FOXO1; the interaction is direct and leads to FOXO1 ubiquitination and degradation via the proteasome pathway in hepatocytes. In terms of processing, acetylated by EP300; acetylation positively regulates the transcriptional activity of XBP1 isoform 2. Isoform 2 is deacetylated by SIRT1; deacetylation negatively regulates the transcriptional activity of XBP1 isoform 2. Ubiquitinated, leading to proteasomal degradation in response to ER stress. Post-translationally, X-box-binding protein 1, cytoplasmic form and luminal form are produced by intramembrane proteolytic cleavage of ER membrane-anchored isoform 1 triggered by HM13/SPP in a DERL1-RNF139-dependent and VCP/p97-independent manner. X-box-binding protein 1, luminal form is ubiquitinated leading to proteasomal degradation. As to expression, isoform 1 and isoform 2 are expressed at higher level in branch curves of vessel walls and in atherosclerotic plaques relative to healthy segments of the same aortas (at protein level). Expressed in skeletal muscles, plasma cells and pancreatic beta cells. Isoform 1 and isoform 2 are expressed in gonadal adipose tissue. Isoform 1 is expressed in inguinal adipose tissue.

It is found in the endoplasmic reticulum. The protein resides in the nucleus. It localises to the cytoplasm. The protein localises to the endoplasmic reticulum membrane. Its subcellular location is the membrane. Functionally, functions as a transcription factor during endoplasmic reticulum stress by regulating the unfolded protein response (UPR). Required for cardiac myogenesis and hepatogenesis during embryonic development and the development of secretory tissues such as exocrine pancreas and salivary gland. Involved in differentiation of B lymphocytes to plasma cells and production of immunoglobulins. Modulates the cellular response to ER stress in a PIK3R-dependent manner. Binds to the cis-acting X box present in the promoter regions of major histocompatibility complex class II genes. Involved in VEGF-induced endothelial cell (EC) proliferation and retinal blood vessel formation during embryonic development but also for angiogenesis in adult tissues under ischemic conditions. Also functions as a major regulator of the UPR in obesity-induced insulin resistance and type 2 diabetes for the management of obesity and diabetes prevention. Plays a role in the unconventional cytoplasmic splicing processing of its own mRNA triggered by the endoplasmic reticulum (ER) transmembrane endoribonuclease ERN1: upon ER stress, the emerging XBP1 polypeptide chain, as part of a mRNA-ribosome-nascent chain (R-RNC) complex, cotranslationally recruits its own unprocessed mRNA through transient docking to the ER membrane and translational pausing, therefore facilitating efficient IRE1-mediated XBP1 mRNA isoform 2 production. In endothelial cells (EC), associated with KDR, promotes IRE1-mediated XBP1 mRNA isoform 2 production in a vascular endothelial growth factor (VEGF)-dependent manner, leading to EC proliferation and angiogenesis. Functions as a negative feed-back regulator of the potent transcription factor XBP1 isoform 2 protein levels through proteasome-mediated degradation, thus preventing the constitutive activation of the ER stress response signaling pathway. Inhibits the transactivation activity of XBP1 isoform 2 in myeloma cells. Acts as a weak transcriptional factor. Together with HDAC3, contributes to the activation of NFE2L2-mediated HMOX1 transcription factor gene expression in a PI(3)K/mTORC2/Akt-dependent signaling pathway leading to EC survival under disturbed flow/oxidative stress. Binds to the ER stress response element (ERSE) upon ER stress. Binds to the consensus 5'-GATGACGTG[TG]N(3)[AT]T-3' sequence related to cAMP responsive element (CRE)-like sequences. Binds the Tax-responsive element (TRE) present in the long terminal repeat (LTR) of T-cell leukemia virus type 1 (HTLV-I) and to the TPA response elements (TRE). Associates preferentially to the HDAC3 gene promoter region in a static flow-dependent manner. Binds to the CDH5/VE-cadherin gene promoter region. In terms of biological role, functions as a stress-inducible potent transcriptional activator during endoplasmic reticulum (ER) stress by inducing unfolded protein response (UPR) target genes via binding to the UPR element (UPRE). Up-regulates target genes encoding ER chaperones and ER-associated degradation (ERAD) components to enhance the capacity of productive folding and degradation mechanism, respectively, in order to maintain the homeostasis of the ER under ER stress. Plays a role in the production of immunoglobulins and interleukin-6 in the presence of stimuli required for plasma cell differentiation, and promotes as well membrane phospholipid biosynthesis necessary for ER expansion. Contributes to the VEGF-induced endothelial cell (EC) growth and proliferation in a Akt/GSK-dependent and/or -independent signaling pathway, respectively, leading to beta-catenin nuclear translocation and E2F2 gene expression. Promotes umbilical vein EC apoptosis and atherosclerotisis development in a caspase-dependent signaling pathway, and contributes to VEGF-induced EC proliferation and angiogenesis in adult tissues under ischemic conditions. Involved in the regulation of endostatin-induced autophagy in EC through BECN1 transcriptional activation. Plays a role as an oncogene by promoting tumor progression: stimulates zinc finger protein SNAI1 transcription to induce epithelial-to-mesenchymal (EMT) transition, cell migration and invasion of breast cancer cells. Involved in adipocyte differentiation by regulating lipogenic gene expression during lactation. Plays a role in the survival of both dopaminergic neurons of the substantia nigra pars compacta (SNpc), by maintaining protein homeostasis and of myeloma cells. Increases insulin sensitivity in the liver as a response to a high carbohydrate diet, resulting in improved glucose tolerance. Also improves glucose homeostasis in an ER stress- and/or insulin-independent manner through both binding and proteasome-induced degradation of the transcription factor FOXO1, hence resulting in suppression of gluconeogenic genes expression and in a reduction of blood glucose levels. Controls the induction of de novo fatty acid synthesis in hepatocytes by regulating the expression of a subset of lipogenic genes in an ER stress- and UPR-independent manner. Binds to the 5'-CCACG-3' motif in the PPARG promoter. Associates preferentially to the HDAC3 gene promoter region in a disturbed flow-dependent manner. Binds to the BECN1 gene promoter region. Binds to the CDH5/VE-cadherin gene promoter region. Binds to the ER stress response element (ERSE) upon ER stress. The polypeptide is X-box-binding protein 1 (Mus musculus (Mouse)).